The sequence spans 375 residues: MVKKPRMATPAASKGVKLDPGMKTILEKEPGLKTTLQQIEKSFGDGAIMPLGASQKLTIDCISTGSLSLDMALGGKGIPRGRIIEVFGPESSGKTTLALHIGAEAQKSGGIAAIIDAEHAFDPSWAKKLGVELDSLLVSQPSSGEEAMQICEMLVKSNAVDVIIIDSVAALVPKAELEGEIGDSHVGLQARLMSQSMRKLTGAIAKSKSAVVFINQIREKVGVMFGSPETTPGGRALKFYCSCRIDVRRIGSLKDGEEQVGQRVKAKIVKNKVAPPFRIAEFDMMHSNGISFEGDLLDLGTENKVVNRSGSWFKYGDTYLGQGKEKARNFLIENPDVSDEIKQKVLAAGGFVAPLEVDADESEEAVEDGEAVANS.

88–95 (GPESSGKT) lines the ATP pocket.

It belongs to the RecA family.

It localises to the cytoplasm. Functionally, can catalyze the hydrolysis of ATP in the presence of single-stranded DNA, the ATP-dependent uptake of single-stranded DNA by duplex DNA, and the ATP-dependent hybridization of homologous single-stranded DNAs. It interacts with LexA causing its activation and leading to its autocatalytic cleavage. The chain is Protein RecA from Rhodopirellula baltica (strain DSM 10527 / NCIMB 13988 / SH1).